We begin with the raw amino-acid sequence, 167 residues long: MATSELSCEVSEENCERREAFWAEWKDLTLSTRPEEGCSLHEEDTQRHETYHQQGQCQVLVQRSPWLMMRMGILGRGLQEYQLPYQRVLPLPIFTPAKMGATKEEREDTPIQLQELLALETALGGQCVDRQEVAEITKQLPPVVPVSKPGALRRSLSRSMSQEAQRG.

The residue at position 39 (Ser-39) is a Phosphoserine. The disordered stretch occupies residues 144 to 167 (VPVSKPGALRRSLSRSMSQEAQRG). The span at 157 to 167 (SRSMSQEAQRG) shows a compositional bias: polar residues.

In terms of assembly, interacts with MYOZ1, MYOZ2 and MYOZ3. Interacts with CSRP3. Interacts directly with the N-terminal Ig-like domains of 2 titin (TTN) molecules. Interacts with ANKRD2; the interaction is direct. In terms of tissue distribution, heart and skeletal muscle.

The protein resides in the cytoplasm. It localises to the myofibril. Its subcellular location is the sarcomere. Functionally, muscle assembly regulating factor. Mediates the antiparallel assembly of titin (TTN) molecules at the sarcomeric Z-disk. The protein is Telethonin (TCAP) of Homo sapiens (Human).